The primary structure comprises 516 residues: Delta(24)-sterol reductase (516 aa).

An N-terminal signal peptide occupies residues 1–22 (MEPAVSLAVCALLFLLWVRVKG). Over 23–31 (LEFVLIHQR) the chain is Lumenal. A helical membrane pass occupies residues 32-52 (WVFVCLFLLPLSLIFDIYYYV). At 53 to 516 (RAWVVFKLSS…YDKICKAARH (464 aa)) the chain is on the cytoplasmic side. Residues 58–234 (FKLSSAPRLH…VAAEIRIIPA (177 aa)) enclose the FAD-binding PCMH-type domain. Position 163-175 (163-175 (TVGGLIMGTGIES)) interacts with FAD.

It belongs to the FAD-binding oxidoreductase/transferase type 4 family. In terms of assembly, interacts with DHCR7; this interaction regulates DHCR7 activity. The cofactor is FAD.

The protein localises to the endoplasmic reticulum membrane. It localises to the golgi apparatus membrane. The catalysed reaction is cholesterol + NADP(+) = desmosterol + NADPH + H(+). It carries out the reaction lanosterol + NADPH + H(+) = 24,25-dihydrolanosterol + NADP(+). It catalyses the reaction 5alpha-cholest-8-en-3beta-ol + NADP(+) = zymosterol + NADPH + H(+). It functions in the pathway steroid biosynthesis; cholesterol biosynthesis. Functionally, catalyzes the reduction of the delta-24 double bond of sterol intermediates during cholesterol biosynthesis. In addition to its cholesterol-synthesizing activity, can protect cells from oxidative stress by reducing caspase 3 activity during apoptosis induced by oxidative stress. Also protects against amyloid-beta peptide-induced apoptosis. In Macaca fascicularis (Crab-eating macaque), this protein is Delta(24)-sterol reductase (DHCR24).